Consider the following 395-residue polypeptide: Phosphoprotein (395 aa).

Disordered regions lie at residues 34–104, 126–179, and 192–214; these read VGRS…ADEA, NKSS…GTDA, and LSAG…PAPV. The span at 65–74 shows a compositional bias: basic and acidic residues; it reads TPDRQDRSDK. Polar residues-rich tracts occupy residues 89–98 and 147–178; these read PATSTDQPPT and PTQQ…QGTD. The tract at residues 222-285 is multimerization; sequence DFVQAMMSMM…LGMMKILDPG (64 aa).

It belongs to the rubulavirus/avulavirus P protein family. As to quaternary structure, homotetramer. Interacts (via multimerization domain) with polymerase L; this interaction forms the polymerase L-P complex. Interacts (via N-terminus) with N0 (via Ncore); this interaction allows P to chaperon N0 to avoid N polymerization before encapsidation. Interacts (via C-terminus) with N-RNA template; this interaction positions the polymerase on the template for both transcription and replication.

In terms of biological role, essential cofactor of the RNA polymerase L that plays a central role in the transcription and replication by forming the polymerase complex with RNA polymerase L and recruiting L to the genomic N-RNA template for RNA synthesis. Also plays a central role in the encapsidation of nascent RNA chains by forming the encapsidation complex with the nucleocapsid protein N (N-P complex). Acts as a chaperone for newly synthesized free N protein, so-called N0, allowing encapsidation of nascent RNA chains during replication. The nucleoprotein protein N prevents excessive phosphorylation of P, which leads to down-regulation of viral transcription/ replication. Participates, together with N, in the formation of viral factories (viroplasms), which are large inclusions in the host cytoplasm where replication takes place. The sequence is that of Phosphoprotein (P/V) from Newcastle disease virus (strain Ulster/2C) (NDV).